Reading from the N-terminus, the 396-residue chain is Cathepsin D (396 aa).

The signal sequence occupies residues 1–18 (MKMLLLCVFSALALTNDA). Positions 19–61 (LVRIPLKKFRSIRRQLTDSGKRAEELLADHHSLKYNLSFPASN) are cleaved as a propeptide — activation peptide. In terms of domain architecture, Peptidase A1 spans 76–393 (YYGEIGLGTP…DRDANRVGFA (318 aa)). Aspartate 94 is a catalytic residue. A disulfide bridge links cysteine 107 with cysteine 114. Asparagine 131 and asparagine 249 each carry an N-linked (GlcNAc...) asparagine glycan. Cysteines 272 and 276 form a disulfide. Residue aspartate 281 is part of the active site. Cysteine 315 and cysteine 352 are disulfide-bonded.

This sequence belongs to the peptidase A1 family. In terms of assembly, monomer.

The protein resides in the lysosome. The enzyme catalyses Specificity similar to, but narrower than, that of pepsin A. Does not cleave the 4-Gln-|-His-5 bond in B chain of insulin.. With respect to regulation, inhibited by pepstatin. Acid protease active in intracellular protein breakdown. The protein is Cathepsin D (ctsd) of Chionodraco hamatus (Antarctic teleost icefish).